A 247-amino-acid chain; its full sequence is Flagellar brake protein YcgR 2 (247 aa).

The 114-residue stretch at 124–237 (QRREYFRVET…DETRIQRYIA (114 aa)) folds into the PilZ domain.

Belongs to the YcgR family. Monomer. Interacts with the flagellar basal bodies.

It localises to the bacterial flagellum basal body. In terms of biological role, acts as a flagellar brake, regulating swimming and swarming in a bis-(3'-5') cyclic diguanylic acid (c-di-GMP)-dependent manner. Binds 1 c-di-GMP dimer per subunit. Increasing levels of c-di-GMP lead to decreased motility. This Dechloromonas aromatica (strain RCB) protein is Flagellar brake protein YcgR 2.